The chain runs to 275 residues: COP9 signalosome complex subunit 7a (275 aa).

Position 2 is an N-acetylserine (serine 2). The 158-residue stretch at 2–159 (SAEVKVTGQN…QRLEVDYSIG (158 aa)) folds into the PCI domain. The stretch at 185 to 233 (LSGIEEQVSRANQHKEQQLGLKQQIESEVANLKKTIKVTTAAAAAATSQ) forms a coiled coil. The tract at residues 227–275 (AAAATSQDPEQHLTELREPAPGTNQRQPSKKASKGKGLRGSAKIWSKSN) is disordered. A compositionally biased stretch (basic and acidic residues) spans 235-244 (PEQHLTELRE). The segment covering 254-263 (PSKKASKGKG) has biased composition (basic residues).

This sequence belongs to the CSN7/EIF3M family. CSN7 subfamily. In terms of assembly, component of the CSN complex, composed of COPS1/GPS1, COPS2, COPS3, COPS4, COPS5, COPS6, COPS7 (COPS7A or COPS7B), COPS8 and COPS9. In the complex, it probably interacts directly with COPS1, COPS2, COPS4, COPS5, COPS6 and COPS8. Interacts with PMF1. Interacts with the translation initiation factor EIF3S6. Interacts with CK2 and PKD. Interacts directly with ID3. Phosphorylated by CK2 and PKD kinases.

It is found in the cytoplasm. It localises to the nucleus. Functionally, component of the COP9 signalosome complex (CSN), a complex involved in various cellular and developmental processes. The CSN complex is an essential regulator of the ubiquitin (Ubl) conjugation pathway by mediating the deneddylation of the cullin subunits of SCF-type E3 ligase complexes, leading to decrease the Ubl ligase activity of SCF-type complexes such as SCF, CSA or DDB2. The complex is also involved in phosphorylation of p53/TP53, JUN, I-kappa-B-alpha/NFKBIA, ITPK1 and IRF8/ICSBP, possibly via its association with CK2 and PKD kinases. CSN-dependent phosphorylation of TP53 and JUN promotes and protects degradation by the Ubl system, respectively. The polypeptide is COP9 signalosome complex subunit 7a (COPS7A) (Pongo abelii (Sumatran orangutan)).